A 278-amino-acid chain; its full sequence is Thioredoxin-related transmembrane protein 1 (278 aa).

The signal sequence occupies residues 1–26 (MAHLGRLMVPLAALVLLLWAVPGAHG). In terms of domain architecture, Thioredoxin spans 27–132 (RRNNVRVLTD…FINFVSDKEW (106 aa)). The Extracellular portion of the chain corresponds to 27-181 (RRNNVRVLTD…DLGIPAWGSY (155 aa)). Catalysis depends on nucleophile residues C56 and C59. Cysteines 56 and 59 form a disulfide. Residues 182-202 (LVFAFATVLSGLLLGLCMIFV) form a helical membrane-spanning segment. The Cytoplasmic segment spans residues 203 to 278 (ADCLCPSKRR…VGLPSATDTS (76 aa)). 2 S-palmitoyl cysteine lipidation sites follow: C205 and C207. Positions 217 to 226 (QYAKKTSPEF) are enriched in polar residues. A disordered region spans residues 217-278 (QYAKKTSPEF…VGLPSATDTS (62 aa)). The segment covering 235 to 251 (EEQEADEEDVSEEEAED) has biased composition (acidic residues). Residues S245 and S278 each carry the phosphoserine modification.

Interacts with ATP2A2. Palmitoylated; palmitoylation is required for localization to mitochondria-associated endoplasmic reticulum membrane (MAM).

The protein localises to the endoplasmic reticulum membrane. Its subcellular location is the mitochondrion membrane. The protein resides in the secreted. It catalyses the reaction Catalyzes the rearrangement of -S-S- bonds in proteins.. In terms of biological role, thiredoxin domain-containing protein that participates in various redox reactions through the reversible oxidation of its active center dithiol to a disulfide and catalyze dithiol-disulfide exchange reactions. Acts as a key inhibitor of the alternative triglyceride biosynthesis pathway by inhibiting the activity of TMEM68/DIESL at the endoplasmic reticulum, thereby restricting accumulation of triacylglycerol. The alternative triglyceride biosynthesis pathway mediates formation of triacylglycerol from diacylglycerol and membrane phospholipids. Acts as a protein disulfide isomerase by catalyzing formation or reduction of disulfide bonds. Specifically mediates formation of disulfide bonds of transmembrane proteins at the endoplasmic reticulum membrane. Involved in ER-associated degradation (ERAD) via its protein disulfide isomerase activity by acting on folding-defective polypeptides at the endoplasmic reticulum membrane. Acts as a negative regulator of platelet aggregation following secretion in the extracellular space. Acts as a regulator of endoplasmic reticulum-mitochondria contact sites via its ability to regulate redox signals. Regulates endoplasmic reticulum-mitochondria Ca(2+) flux. The protein is Thioredoxin-related transmembrane protein 1 of Mus musculus (Mouse).